We begin with the raw amino-acid sequence, 456 residues long: Alcohol acyltransferase 17 (456 aa).

Residues His-166 and Asp-382 each act as proton acceptor in the active site.

Belongs to the plant acyltransferase family. As to expression, expressed in fruit.

Functionally, involved in the biosynthesis of volatile esters which confer kiwifruit flavor. Alcohol acyl transferase that can use a wide range of alcohols as substrate to produce esters. The sequence is that of Alcohol acyltransferase 17 from Actinidia deliciosa (Kiwi).